A 1566-amino-acid polypeptide reads, in one-letter code: Arginine-glutamic acid dipeptide repeats protein (1566 aa).

Residues 1 to 36 (MTADKDKDKDKEKDRDRDRDREREKRDKARESENSR) show a composition bias toward basic and acidic residues. A disordered region spans residues 1-90 (MTADKDKDKD…KKKSRYERTD (90 aa)). A phosphoserine mark is found at Ser53 and Ser56. A compositionally biased stretch (basic residues) spans 74-85 (KNKKKPPKKKSR). The BAH domain maps to 103-283 (VVYRPGDCVY…PETRRLNSTQ (181 aa)). Thr120 carries the phosphothreonine modification. 2 positions are modified to phosphoserine: Ser142 and Ser304. The ELM2 domain maps to 284-387 (GEIRVGPSHQ…KALQRLVKKP (104 aa)). The SANT domain occupies 391 to 443 (LIEKCWTEDEVKRFVKGLRQYGKNFFRIRKELLPNKETGELITFYYYWKKTPE). The segment at 464-495 (TRTASTPVNTPSRPPSSEFLDLSSASEDDFDS) is disordered. The span at 465–474 (RTASTPVNTP) shows a compositional bias: polar residues. The segment covering 479–488 (SSEFLDLSSA) has biased composition (low complexity). The segment at 507-532 (CRHCFTTTSKDWHHGGRENILLCTDC) adopts a GATA-type zinc-finger fold. The tract at residues 542–1133 (LPPIEKPVDP…PSHASQSARF (592 aa)) is disordered. A Glycyl lysine isopeptide (Lys-Gly) (interchain with G-Cter in SUMO2) cross-link involves residue Lys560. Phosphoserine occurs at positions 594, 600, and 613. The segment covering 609–623 (SGRNSPSAASTSSND) has biased composition (low complexity). A compositionally biased stretch (basic and acidic residues) spans 624 to 640 (SKAETVKKSAKKVKEEA). Residue Lys637 forms a Glycyl lysine isopeptide (Lys-Gly) (interchain with G-Cter in SUMO2) linkage. Ser642, Ser656, Ser675, and Ser679 each carry phosphoserine. Positions 652-673 (EKVASDTEEADRTSSKKTKTQE) are enriched in basic and acidic residues. Basic and acidic residues predominate over residues 688 to 708 (SDSRSVNDEGSSDPKDIDQDN). The span at 709-720 (RSTSPSIPSPQD) shows a compositional bias: polar residues. The span at 726–751 (DSSAQQQMLQAQPPALQAPTGVTPAP) shows a compositional bias: low complexity. Positions 752–767 (SSAPPGTPQLPTPGPT) are enriched in pro residues. A compositionally biased stretch (low complexity) spans 778 to 796 (SPTASQAPNQPQAPTAPVP). Residues 809–827 (QRPPSPHPPPHPSPHPPLQ) are compositionally biased toward pro residues. Over residues 829 to 840 (LTGSAGQPSAPS) the composition is skewed to polar residues. 2 stretches are compositionally biased toward low complexity: residues 843-865 (QPPL…LLQH) and 897-913 (SLQL…QQPP). The segment covering 914–940 (REQPLPPAPLAMPHIKPPPTTPIPQLP) has biased composition (pro residues). Low complexity predominate over residues 970–980 (KPLSSLSTHHP). The segment covering 1030–1052 (PQPPFAQHPFVPGGPPPITPPTC) has biased composition (pro residues). The span at 1053 to 1085 (PSTSTPPAGPGTSAQPPCSGAAASGGSIAGGSS) shows a compositional bias: low complexity. Phosphoserine is present on residues Ser1106, Ser1113, and Ser1115. Over residues 1106–1117 (SPPPPPRSPSPE) the composition is skewed to pro residues. At Thr1119 the chain carries Phosphothreonine. Positions 1156–1211 (GSKLAKKREEAIEKAKREAEQKAREEREREKEKEKEREREREREREAERAAKASSS) form a coiled coil. N6-acetyllysine is present on Lys1158. Over residues 1162 to 1206 (KREEAIEKAKREAEQKAREEREREKEKEKEREREREREREAERAA) the composition is skewed to basic and acidic residues. The tract at residues 1162–1246 (KREEAIEKAK…TTIAAVPPYI (85 aa)) is disordered. At Tyr1259 the chain carries Phosphotyrosine. Residue Ser1266 is modified to Phosphoserine.

Interacts with HDAC1. Interacts with ATN1. Interaction with ATN1 is improved when the poly-Gln region of ATN1 is extended. Interacts with FAT1. In terms of tissue distribution, widely expressed. Expressed in tumor cell lines.

The protein resides in the nucleus. Its function is as follows. Plays a role as a transcriptional repressor during development. May play a role in the control of cell survival. Overexpression of RERE recruits BAX to the nucleus particularly to POD and triggers caspase-3 activation, leading to cell death. The protein is Arginine-glutamic acid dipeptide repeats protein (RERE) of Homo sapiens (Human).